We begin with the raw amino-acid sequence, 103 residues long: Nucleoid-associated protein BH0035 (103 aa).

Residues 1 to 20 (MKNMGQMMKQMQKMQKQMMK) show a composition bias toward low complexity. The interval 1 to 29 (MKNMGQMMKQMQKMQKQMMKAQEELKEKT) is disordered.

It belongs to the YbaB/EbfC family. Homodimer.

It is found in the cytoplasm. It localises to the nucleoid. Functionally, binds to DNA and alters its conformation. May be involved in regulation of gene expression, nucleoid organization and DNA protection. The sequence is that of Nucleoid-associated protein BH0035 from Halalkalibacterium halodurans (strain ATCC BAA-125 / DSM 18197 / FERM 7344 / JCM 9153 / C-125) (Bacillus halodurans).